The sequence spans 207 residues: Urease accessory protein UreG (207 aa).

Gly12–Thr19 is a binding site for GTP.

The protein belongs to the SIMIBI class G3E GTPase family. UreG subfamily. As to quaternary structure, homodimer. UreD, UreF and UreG form a complex that acts as a GTP-hydrolysis-dependent molecular chaperone, activating the urease apoprotein by helping to assemble the nickel containing metallocenter of UreC. The UreE protein probably delivers the nickel.

The protein resides in the cytoplasm. Its function is as follows. Facilitates the functional incorporation of the urease nickel metallocenter. This process requires GTP hydrolysis, probably effectuated by UreG. This Cereibacter sphaeroides (strain ATCC 17029 / ATH 2.4.9) (Rhodobacter sphaeroides) protein is Urease accessory protein UreG.